Reading from the N-terminus, the 185-residue chain is Neuronal vesicle trafficking-associated protein 1 (185 aa).

At 1-82 (MVKLGNNFAE…ITEGVTERFK (82 aa)) the chain is on the cytoplasmic side. Residues 83 to 103 (VSVLVLFALAFLTCVVFLVVY) traverse the membrane as a helical; Signal-anchor for type II membrane protein segment. The Lumenal portion of the chain corresponds to 104 to 185 (KVYKYDRACP…QETEAAEKSA (82 aa)). Positions 129-164 (ESYYTEQDSSAREKFYTVINHYNVAKQSITRSVSPW) are required for GRIP1 interaction.

The protein belongs to the NSG family. As to quaternary structure, forms a complex with GRIP1, GRIA2 and STX12 through direct interaction with GRIP1; controls the intracellular fate of AMPAR and the endosomal sorting of the GRIA2 subunit toward recycling and membrane targeting. Interacts with STX12. Interacts with APP; could regulate APP processing. Interacts with FAM171A1. In terms of tissue distribution, pituitary and less in adrenal gland and testis. Expressed in the hippocampus throughout development. At P0, highly and broadly expressed throughout the cortical plate, but is down-regulated overall at P8 and P14, but remains relatively enriched in layer V. At P0 is expressed ubiquitously in the developing cerebellum namely Purkinje neurons as well as granule neurons. However, it becomes restricted to Purkinje cells by P8. This exclusive expression in Purkinje cells is maintained throughout adulthood.

The protein resides in the membrane. It is found in the golgi apparatus. The protein localises to the trans-Golgi network membrane. Its subcellular location is the endosome membrane. It localises to the cell projection. The protein resides in the dendrite. It is found in the early endosome membrane. The protein localises to the late endosome membrane. Its subcellular location is the lysosome lumen. It localises to the recycling endosome membrane. The protein resides in the cytoplasmic vesicle membrane. It is found in the golgi stack membrane. The protein localises to the endosome. Its subcellular location is the multivesicular body membrane. It localises to the endoplasmic reticulum membrane. Functionally, plays a role in the recycling mechanism in neurons of multiple receptors, including AMPAR, APP and L1CAM and acts at the level of early endosomes to promote sorting of receptors toward a recycling pathway. Regulates sorting and recycling of GRIA2 through interaction with GRIP1 and then contributes to the regulation of synaptic transmission and plasticity by affecting the recycling and targeting of AMPA receptors to the synapse. Is required for faithful sorting of L1CAM to axons by facilitating trafficking from somatodendritic early endosome or the recycling endosome. In an other hand, induces apoptosis via the activation of CASP3 in response to DNA damage. This is Neuronal vesicle trafficking-associated protein 1 from Mus musculus (Mouse).